We begin with the raw amino-acid sequence, 421 residues long: UDP-N-acetylglucosamine 1-carboxyvinyltransferase 2 (421 aa).

Phosphoenolpyruvate is bound at residue 22–23 (KN). Arg94 serves as a coordination point for UDP-N-acetyl-alpha-D-glucosamine. Residue Cys118 is the Proton donor of the active site. The residue at position 118 (Cys118) is a 2-(S-cysteinyl)pyruvic acid O-phosphothioketal. UDP-N-acetyl-alpha-D-glucosamine is bound by residues Asp308 and Ile330.

It belongs to the EPSP synthase family. MurA subfamily.

The protein resides in the cytoplasm. The enzyme catalyses phosphoenolpyruvate + UDP-N-acetyl-alpha-D-glucosamine = UDP-N-acetyl-3-O-(1-carboxyvinyl)-alpha-D-glucosamine + phosphate. It functions in the pathway cell wall biogenesis; peptidoglycan biosynthesis. In terms of biological role, cell wall formation. Adds enolpyruvyl to UDP-N-acetylglucosamine. This Lactococcus lactis subsp. lactis (strain IL1403) (Streptococcus lactis) protein is UDP-N-acetylglucosamine 1-carboxyvinyltransferase 2.